Consider the following 608-residue polypeptide: Serine/threonine-protein kinase ROP17 (608 aa).

A signal peptide spans 1–21; that stretch reads MELVLCFVIITISGVIRESSA. Asn-76 carries N-linked (GlcNAc...) asparagine glycosylation. The region spanning 283 to 579 is the Protein kinase domain; it reads LKKRGFLGGG…QQALEQFSLL (297 aa). Residues 289-297 and Lys-312 contribute to the ATP site; that span reads LGGGGFGLV. Asp-436 (proton acceptor) is an active-site residue.

It belongs to the protein kinase superfamily. Ser/Thr protein kinase family. As to quaternary structure, interacts with ROP5; interaction with ROP5 does not affect kinase activity. Interacts with human BCL2; the interaction probably promotes BCL2 phosphorylation and degradation.

It is found in the secreted. Its subcellular location is the cytoplasmic vesicle. The protein localises to the secretory vesicle. It localises to the rhoptry. The protein resides in the parasitophorous vacuole membrane. It catalyses the reaction L-threonyl-[protein] + ATP = O-phospho-L-threonyl-[protein] + ADP + H(+). The enzyme catalyses L-seryl-[protein] + ATP = O-phospho-L-seryl-[protein] + ADP + H(+). Protein kinase. Virulence factor. Promotes migration of Toxoplasma-infected macrophages through collagen matrix, facilitating parasite transport through tissues and systemic dissemination. Plays a role in the translocation of dense granule effectors, such as GRA16 and GRA24, across the parasitophorous vacuole membrane in Toxoplasma-infected host cells. Phosphorylates mouse IRGB6 (TGTP1/TGTP2), an immunity-related GTPase (IRG) that protects mice from infection by certain intracellular pathogens; the phosphorylation leads to the disassembly of IRGB6 polymers into monomers and dimers. May modulate gene expression in human cells. Promotes autophagy in human cells via modulation of the BCL2-BECN1 pathway. The sequence is that of Serine/threonine-protein kinase ROP17 from Toxoplasma gondii.